Reading from the N-terminus, the 861-residue chain is Protein argonaute-4 (861 aa).

In terms of domain architecture, PAZ spans 219–338 (PIIEFMCEVL…LPLEVCNIVA (120 aa)). Positions 509–820 (LIVVILPGKT…VAFRARYHLV (312 aa)) constitute a Piwi domain. Positions 825 to 846 (DSAEGSHVSGQSNGRDPQALAK) are disordered.

This sequence belongs to the argonaute family. Ago subfamily. As to quaternary structure, interacts with EIF4B, IMP8, PRMT5, TNRC6A and TNRC6B. Interacts with ZFP36. In terms of processing, ubiquitinated on surface-exposed lysines by a SCF-like E3 ubiquitin-protein ligase complex containing ZSWIM8 during target-directed microRNA degradation (TDMD), a process that mediates degradation of microRNAs (miRNAs). Ubiquitination by the SCF-like E3 ubiquitin-protein ligase complex containing ZSWIM8 leads to its subsequent degradation, thereby exposing miRNAs for degradation. ZSWIM8 recognizes and binds AGO4 when it is engaged with a TDMD target.

It is found in the cytoplasm. The protein resides in the P-body. In terms of biological role, required for RNA-mediated gene silencing (RNAi). Binds to short RNAs such as microRNAs (miRNAs) and represses the translation of mRNAs which are complementary to them. Lacks endonuclease activity and does not appear to cleave target mRNAs. The sequence is that of Protein argonaute-4 (Ago4) from Mus musculus (Mouse).